Reading from the N-terminus, the 323-residue chain is MPGDEQEAKKAAQRTEEGVHITEALITKRNLTFPGDEDLSEKMFHTLGELETVRLDGEGITCIGNLEKLRNIHSLYLQSNKIQRIENLACITSLRFLSLARNQIRHVENLLDLQYLQFLDLSENLIETLKLDELPESLLILNLCGNPCTNQEGYRKMVIGALPLLLDLDKQPILERWTSDEEDKSSDDDDEFPELNGPFCAERGFFKDLEQELHQHQERRQQAALTEHLSRMETQPVLTDLPLLPAVPMAGDCSSTATDQPGKESAPKATSSTQTASTTKKQVSKNQKSSVQARKGALAATTSKTSQAATPSMTKMTNKKSTK.

4 LRR repeats span residues 49–70 (ELETVRLDGEGITCIGNLEKLR), 71–92 (NIHSLYLQSNKIQRIENLACIT), 93–114 (SLRFLSLARNQIRHVENLLDLQ), and 115–135 (YLQFLDLSENLIETLKLDELP). The region spanning 146-188 (NPCTNQEGYRKMVIGALPLLLDLDKQPILERWTSDEEDKSSDD) is the LRRCT domain. A Phosphothreonine modification is found at Thr178. Phosphoserine is present on residues Ser179, Ser185, and Ser186. Residues 203–228 (RGFFKDLEQELHQHQERRQQAALTEH) are a coiled coil. The tract at residues 249–323 (MAGDCSSTAT…TKMTNKKSTK (75 aa)) is disordered. A compositionally biased stretch (low complexity) spans 267–316 (PKATSSTQTASTTKKQVSKNQKSSVQARKGALAATTSKTSQAATPSMTKM). Ser303 is subject to Phosphoserine.

Testis-specific (at protein level).

It localises to the cell projection. It is found in the cilium. The protein resides in the flagellum. Functionally, required for normal spermatogenesis and male fertility. Plays an important role in sperm flagellum biogenesis. The protein is Leucine-rich repeat-containing protein 46 (Lrrc46) of Mus musculus (Mouse).